A 77-amino-acid chain; its full sequence is Blood-induced peptide 1 (77 aa).

Positions 38 to 71 (EDFLHQENSELKKSLKNLEMENEKLKNILKTDYN) form a coiled coil.

Functionally, plays an important role in survival in host blood through increasing tolerance to stresses such as heat, salt, or cycloheximide, which is essential for virulence. This Candida albicans (strain SC5314 / ATCC MYA-2876) (Yeast) protein is Blood-induced peptide 1.